The sequence spans 365 residues: MFEVNPVINQIKEIRERTELLRGYLDYALKQERLEEVNAELEDSAVWNEPERAQALGREKSALEAVVETIDTLVTGTDDVEGLLELAVEAEDQETFDEAQSELADLNEQLEALEFRRMFSGPHDSNDAYLDLQSGSGGTEAQDWCNILLRMYLRWGEAKGFKVELVEATGGDVAGIKGATVRFVGEYAYGWLRTETGVHRLVRKSPFDSSGRRHTSFASAFVYPEVDDNIEIDMNPSDLRIDVYRASGAGGQHVNTTESAVRITHVPTNTVVQCQNERSQHKNKAQAMKQLKAKLFELELQQQNAEKQTQEDSKSDIGWGSQIRSYVLDDARIKDLRTGVESRNTQSVLDGNLDKFIEASLKSGL.

Residue Q252 is modified to N5-methylglutamine.

The protein belongs to the prokaryotic/mitochondrial release factor family. In terms of processing, methylated by PrmC. Methylation increases the termination efficiency of RF2.

Its subcellular location is the cytoplasm. In terms of biological role, peptide chain release factor 2 directs the termination of translation in response to the peptide chain termination codons UGA and UAA. The chain is Peptide chain release factor 2 from Pseudoalteromonas translucida (strain TAC 125).